A 414-amino-acid polypeptide reads, in one-letter code: Nuclear pore complex-interacting protein family member B7 (414 aa).

An N-terminal signal peptide occupies residues M1–H18. N111 carries N-linked (GlcNAc...) asparagine glycosylation. Disordered stretches follow at residues R242–S262 and S335–R402. The segment covering Q252–S262 has biased composition (polar residues). The segment covering E356 to E384 has biased composition (basic and acidic residues). Positions K390 to R402 are enriched in basic residues.

Belongs to the NPIP family.

Its subcellular location is the secreted. This Homo sapiens (Human) protein is Nuclear pore complex-interacting protein family member B7 (NPIPB7).